The chain runs to 102 residues: Large ribosomal subunit protein bL21 (102 aa).

It belongs to the bacterial ribosomal protein bL21 family. In terms of assembly, part of the 50S ribosomal subunit. Contacts protein L20.

Its function is as follows. This protein binds to 23S rRNA in the presence of protein L20. The sequence is that of Large ribosomal subunit protein bL21 from Bacillus pumilus (strain SAFR-032).